The chain runs to 302 residues: HPr kinase/phosphorylase (302 aa).

Catalysis depends on residues H136 and K157. 151–158 (GESGIGKS) provides a ligand contact to ATP. S158 provides a ligand contact to Mg(2+). The active-site Proton acceptor; for phosphorylation activity. Proton donor; for dephosphorylation activity is the D175. Residues 198-207 (LEVRGLGIID) form an important for the catalytic mechanism of both phosphorylation and dephosphorylation region. A Mg(2+)-binding site is contributed by E199. The active site involves R240. The segment at 261 to 266 (PIRPGR) is important for the catalytic mechanism of dephosphorylation.

The protein belongs to the HPrK/P family. As to quaternary structure, homohexamer. It depends on Mg(2+) as a cofactor.

The catalysed reaction is [HPr protein]-L-serine + ATP = [HPr protein]-O-phospho-L-serine + ADP + H(+). The enzyme catalyses [HPr protein]-O-phospho-L-serine + phosphate + H(+) = [HPr protein]-L-serine + diphosphate. Catalyzes the ATP- as well as the pyrophosphate-dependent phosphorylation of a specific serine residue in HPr, a phosphocarrier protein of the phosphoenolpyruvate-dependent sugar phosphotransferase system (PTS). HprK/P also catalyzes the pyrophosphate-producing, inorganic phosphate-dependent dephosphorylation (phosphorolysis) of seryl-phosphorylated HPr (P-Ser-HPr). The two antagonistic activities of HprK/P are regulated by several intracellular metabolites, which change their concentration in response to the absence or presence of rapidly metabolisable carbon sources (glucose, fructose, etc.) in the growth medium. Therefore, by controlling the phosphorylation state of HPr, HPrK/P is a sensor enzyme that plays a major role in the regulation of carbon metabolism and sugar transport: it mediates carbon catabolite repression (CCR), and regulates PTS-catalyzed carbohydrate uptake and inducer exclusion. The chain is HPr kinase/phosphorylase from Clostridium beijerinckii (strain ATCC 51743 / NCIMB 8052) (Clostridium acetobutylicum).